We begin with the raw amino-acid sequence, 98 residues long: Co-chaperonin GroES (98 aa).

This sequence belongs to the GroES chaperonin family. Heptamer of 7 subunits arranged in a ring. Interacts with the chaperonin GroEL.

The protein resides in the cytoplasm. Functionally, together with the chaperonin GroEL, plays an essential role in assisting protein folding. The GroEL-GroES system forms a nano-cage that allows encapsulation of the non-native substrate proteins and provides a physical environment optimized to promote and accelerate protein folding. GroES binds to the apical surface of the GroEL ring, thereby capping the opening of the GroEL channel. In Bartonella tribocorum (strain CIP 105476 / IBS 506), this protein is Co-chaperonin GroES.